Consider the following 1262-residue polypeptide: ATP-dependent helicase/nuclease subunit A (1262 aa).

The 472-residue stretch at 5-476 (FSFTPSQDQA…IVLAENFRSM (472 aa)) folds into the UvrD-like helicase ATP-binding domain. Residue 26 to 33 (ASAGSGKT) participates in ATP binding. In terms of domain architecture, UvrD-like helicase C-terminal spans 515–808 (DTVTSTAELL…SVMTIHGSKG (294 aa)).

It belongs to the helicase family. AddA subfamily. Heterodimer of AddA and AddB/RexB. Mg(2+) is required as a cofactor.

It carries out the reaction Couples ATP hydrolysis with the unwinding of duplex DNA by translocating in the 3'-5' direction.. The enzyme catalyses ATP + H2O = ADP + phosphate + H(+). In terms of biological role, the heterodimer acts as both an ATP-dependent DNA helicase and an ATP-dependent, dual-direction single-stranded exonuclease. Recognizes the chi site generating a DNA molecule suitable for the initiation of homologous recombination. The AddA nuclease domain is required for chi fragment generation; this subunit has the helicase and 3' -&gt; 5' nuclease activities. The polypeptide is ATP-dependent helicase/nuclease subunit A (Levilactobacillus brevis (strain ATCC 367 / BCRC 12310 / CIP 105137 / JCM 1170 / LMG 11437 / NCIMB 947 / NCTC 947) (Lactobacillus brevis)).